We begin with the raw amino-acid sequence, 124 residues long: Ribosome-binding factor A (124 aa).

Belongs to the RbfA family. Monomer. Binds 30S ribosomal subunits, but not 50S ribosomal subunits or 70S ribosomes.

It localises to the cytoplasm. One of several proteins that assist in the late maturation steps of the functional core of the 30S ribosomal subunit. Associates with free 30S ribosomal subunits (but not with 30S subunits that are part of 70S ribosomes or polysomes). Required for efficient processing of 16S rRNA. May interact with the 5'-terminal helix region of 16S rRNA. This Buchnera aphidicola subsp. Schizaphis graminum (strain Sg) protein is Ribosome-binding factor A.